The chain runs to 201 residues: Putative manganese efflux pump MntP 2 (201 aa).

6 helical membrane-spanning segments follow: residues 3–23 (LISV…VSIT), 39–59 (IGLF…SIGI), 65–85 (IAAL…GKMI), 116–136 (LILL…SFAF), 141–161 (IINT…IGVM), and 176–196 (ILGG…HTNI).

Belongs to the MntP (TC 9.B.29) family.

Its subcellular location is the cell membrane. Probably functions as a manganese efflux pump. The sequence is that of Putative manganese efflux pump MntP 2 from Clostridium botulinum (strain Hall / ATCC 3502 / NCTC 13319 / Type A).